The chain runs to 372 residues: NAD(P)H-quinone oxidoreductase subunit 1 (372 aa).

8 helical membrane-spanning segments follow: residues 27 to 47 (LLWI…GVLV), 97 to 117 (VLFT…WLIV), 128 to 148 (VGIG…GLLM), 166 to 186 (AAQS…IVMM), 204 to 224 (FLSW…ICAL), 266 to 286 (VLSA…PISI), 308 to 328 (SLGI…AILL), and 347 to 367 (FLLP…LAFP).

This sequence belongs to the complex I subunit 1 family. In terms of assembly, NDH-1 is composed of at least 11 different subunits.

The protein resides in the cellular thylakoid membrane. It catalyses the reaction a plastoquinone + NADH + (n+1) H(+)(in) = a plastoquinol + NAD(+) + n H(+)(out). It carries out the reaction a plastoquinone + NADPH + (n+1) H(+)(in) = a plastoquinol + NADP(+) + n H(+)(out). NDH-1 shuttles electrons from an unknown electron donor, via FMN and iron-sulfur (Fe-S) centers, to quinones in the respiratory and/or the photosynthetic chain. The immediate electron acceptor for the enzyme in this species is believed to be plastoquinone. Couples the redox reaction to proton translocation, and thus conserves the redox energy in a proton gradient. The chain is NAD(P)H-quinone oxidoreductase subunit 1 from Prochlorococcus marinus (strain NATL2A).